The following is a 502-amino-acid chain: Ubiquitin-associated protein 1 (502 aa).

The segment at 1–95 is interaction with ESCRT-I; the sequence is MASKKLGADF…AEAKVNSKSG (95 aa). In terms of domain architecture, UMA spans 17–63; the sequence is LDDVPFKTGDKFKTPAKVGLPIGFSLPDCLQVVREVQYDFSLEKKTI. Residues 86-100 show a composition bias toward basic and acidic residues; the sequence is AEAKVNSKSGPEGDS. The interval 86 to 117 is disordered; the sequence is AEAKVNSKSGPEGDSKMSFSKTHSTATMPPPI. The span at 102–112 shows a compositional bias: polar residues; that stretch reads MSFSKTHSTAT. Phosphoserine is present on residues Ser-146, Ser-205, and Ser-289. An interaction with PTPN23 region spans residues 260-290; it reads VSNIKSLSFPKLDSDDSNQKTAKLASTFHST. 2 UBA domains span residues 389-430 and 451-498; these read SPSE…LFAH and QCSE…LMAR.

Component of an ESCRT-I complex (endosomal sorting complex required for transport I) which consists of TSG101, VPS28, VPS37A and UBAP1 in a 1:1:1:1 stoichiometry. Interacts with PTPN23. Interacts (via UBA domains) with ubiquitinated proteins. In terms of tissue distribution, ubiquitous. Highly expressed in heart, brain, placenta, lung, liver, skeletal muscle and pancreas.

The protein localises to the cytoplasm. The protein resides in the cytosol. It is found in the endosome. In terms of biological role, component of the ESCRT-I complex, a regulator of vesicular trafficking process. Binds to ubiquitinated cargo proteins and is required for the sorting of endocytic ubiquitinated cargos into multivesicular bodies (MVBs). Plays a role in the proteasomal degradation of ubiquitinated cell-surface proteins, such as EGFR and BST2. The polypeptide is Ubiquitin-associated protein 1 (Homo sapiens (Human)).